The chain runs to 174 residues: Membrane protein NfeD2 (174 aa).

The next 3 membrane-spanning stretches (helical) occupy residues 16-36, 47-67, and 72-92; these read LIIAGSLTLLFLFFGDVFSGL, LVLSFFTCFSAGGYIGELVLP, and LIALLSCILSIMLVVLLHIFV.

This sequence belongs to the NfeD family.

Its subcellular location is the cell membrane. It localises to the membrane raft. In terms of biological role, plays a role in assembly of FloT membrane rafts, probably recruited to rafts by FloT. The polypeptide is Membrane protein NfeD2 (Bacillus subtilis (strain 168)).